A 139-amino-acid polypeptide reads, in one-letter code: Putative pre-16S rRNA nuclease (139 aa).

This sequence belongs to the YqgF nuclease family.

Its subcellular location is the cytoplasm. Its function is as follows. Could be a nuclease involved in processing of the 5'-end of pre-16S rRNA. The protein is Putative pre-16S rRNA nuclease of Bacillus licheniformis (strain ATCC 14580 / DSM 13 / JCM 2505 / CCUG 7422 / NBRC 12200 / NCIMB 9375 / NCTC 10341 / NRRL NRS-1264 / Gibson 46).